A 238-amino-acid polypeptide reads, in one-letter code: 2-phytyl-1,4-naphtoquinone methyltransferase (238 aa).

The protein belongs to the class I-like SAM-binding methyltransferase superfamily. MenG/UbiE family.

It catalyses the reaction demethylphylloquinol + S-adenosyl-L-methionine = phylloquinol + S-adenosyl-L-homocysteine + H(+). It functions in the pathway cofactor biosynthesis; phylloquinone biosynthesis. Methyltransferase required for the conversion of 2-phytyl-1,4-beta-naphthoquinol to phylloquinol. This chain is 2-phytyl-1,4-naphtoquinone methyltransferase, found in Synechocystis sp. (strain ATCC 27184 / PCC 6803 / Kazusa).